The following is a 659-amino-acid chain: Exoribonuclease 2 (659 aa).

The 343-residue stretch at 189–531 (RKDLTALHFV…NHRLIKACIA (343 aa)) folds into the RNB domain. An S1 motif domain is found at 576–658 (KPEFQAEVQD…ETRSLIGNLV (83 aa)).

The protein belongs to the RNR ribonuclease family. RNase II subfamily.

It localises to the cytoplasm. The enzyme catalyses Exonucleolytic cleavage in the 3'- to 5'-direction to yield nucleoside 5'-phosphates.. Functionally, involved in mRNA degradation. Hydrolyzes single-stranded polyribonucleotides processively in the 3' to 5' direction. This chain is Exoribonuclease 2, found in Actinobacillus succinogenes (strain ATCC 55618 / DSM 22257 / CCUG 43843 / 130Z).